The primary structure comprises 152 residues: 2-C-methyl-D-erythritol 2,4-cyclodiphosphate synthase (152 aa).

2 residues coordinate a divalent metal cation: D8 and H10. 4-CDP-2-C-methyl-D-erythritol 2-phosphate-binding positions include 8 to 10 (DSH) and 34 to 35 (HS). Position 42 (H42) interacts with a divalent metal cation. 4-CDP-2-C-methyl-D-erythritol 2-phosphate is bound by residues 56-58 (DIG) and 61-65 (FPDTD).

This sequence belongs to the IspF family. In terms of assembly, homotrimer. A divalent metal cation is required as a cofactor.

It carries out the reaction 4-CDP-2-C-methyl-D-erythritol 2-phosphate = 2-C-methyl-D-erythritol 2,4-cyclic diphosphate + CMP. It functions in the pathway isoprenoid biosynthesis; isopentenyl diphosphate biosynthesis via DXP pathway; isopentenyl diphosphate from 1-deoxy-D-xylulose 5-phosphate: step 4/6. In terms of biological role, involved in the biosynthesis of isopentenyl diphosphate (IPP) and dimethylallyl diphosphate (DMAPP), two major building blocks of isoprenoid compounds. Catalyzes the conversion of 4-diphosphocytidyl-2-C-methyl-D-erythritol 2-phosphate (CDP-ME2P) to 2-C-methyl-D-erythritol 2,4-cyclodiphosphate (ME-CPP) with a corresponding release of cytidine 5-monophosphate (CMP). This chain is 2-C-methyl-D-erythritol 2,4-cyclodiphosphate synthase, found in Thermus thermophilus (strain ATCC BAA-163 / DSM 7039 / HB27).